Reading from the N-terminus, the 330-residue chain is DNA repair and recombination protein RadA (330 aa).

124-131 (GEFGSGKT) is a binding site for ATP.

The protein belongs to the eukaryotic RecA-like protein family.

Its function is as follows. Involved in DNA repair and in homologous recombination. Binds and assemble on single-stranded DNA to form a nucleoprotein filament. Hydrolyzes ATP in a ssDNA-dependent manner and promotes DNA strand exchange between homologous DNA molecules. This is DNA repair and recombination protein RadA from Pyrobaculum neutrophilum (strain DSM 2338 / JCM 9278 / NBRC 100436 / V24Sta) (Thermoproteus neutrophilus).